We begin with the raw amino-acid sequence, 249 residues long: MRPKIVAGNWKLHGSHAFAQALVAQVAAGLPLLGVSVIILPPLLYLSDLAQRFKGEGLAFGAQNVSHHDKGAYTGEVSAAMVADVGAHYTLVGHSERREYHHEDSELVARKFAAALSAGLRPILCVGESLPQREAGQAEVAIAMQLAPVLALVGPQGVARGLIAYEPVWAIGTGRHADPSQVQAMHAFIRGEIARQDARIGDSLLILYGGGIKPCNAAELFSQQDVDGGLIGGASLVADDFLAIARATV.

Substrate is bound at residue 9–11 (NWK). Residue His94 is the Electrophile of the active site. Residue Glu166 is the Proton acceptor of the active site. Substrate contacts are provided by residues Gly172 and 232-233 (GG).

Belongs to the triosephosphate isomerase family. As to quaternary structure, homodimer.

The protein resides in the cytoplasm. The catalysed reaction is D-glyceraldehyde 3-phosphate = dihydroxyacetone phosphate. The protein operates within carbohydrate biosynthesis; gluconeogenesis. Its pathway is carbohydrate degradation; glycolysis; D-glyceraldehyde 3-phosphate from glycerone phosphate: step 1/1. Functionally, involved in the gluconeogenesis. Catalyzes stereospecifically the conversion of dihydroxyacetone phosphate (DHAP) to D-glyceraldehyde-3-phosphate (G3P). The chain is Triosephosphate isomerase from Xylella fastidiosa (strain 9a5c).